Here is a 282-residue protein sequence, read N- to C-terminus: MYRFSNTVIGVLNLLTLLASIPIIGTALYKARSSTTCENFLQTPLLVIGFIILIVSLAGFIGACFNVAWALWVYLVVMIFLIATLMGLTLFGLVVTSQGGGVEVPGRIYKEYRLGDYHPWLRERVRDPEYWNSIRSCILSSKTCTKIESWTTLDYFQRDMTSVQSGCCKPPTACTYEAGVVDGGGDCFRWNNGVEMLCYECDACKAGVLEEIRLDWRKLSVVNILVLVLLIAVYAAGCCAFHNTRHAAHPYHPSDDNRMTRVRPRWDYYWWRWWHEKKEQLY.

Over 1-7 (MYRFSNT) the chain is Cytoplasmic. The helical transmembrane segment at 8 to 28 (VIGVLNLLTLLASIPIIGTAL) threads the bilayer. Over 29–44 (YKARSSTTCENFLQTP) the chain is Extracellular. Residues 45 to 65 (LLVIGFIILIVSLAGFIGACF) traverse the membrane as a helical segment. Over 66–74 (NVAWALWVY) the chain is Cytoplasmic. The chain crosses the membrane as a helical span at residues 75 to 95 (LVVMIFLIATLMGLTLFGLVV). The Extracellular segment spans residues 96–220 (TSQGGGVEVP…EIRLDWRKLS (125 aa)). The helical transmembrane segment at 221–241 (VVNILVLVLLIAVYAAGCCAF) threads the bilayer. Over 242 to 282 (HNTRHAAHPYHPSDDNRMTRVRPRWDYYWWRWWHEKKEQLY) the chain is Cytoplasmic.

This sequence belongs to the tetraspanin (TM4SF) family.

The protein resides in the membrane. May be involved in the regulation of cell differentiation. This Arabidopsis thaliana (Mouse-ear cress) protein is Tetraspanin-6 (TET6).